We begin with the raw amino-acid sequence, 118 residues long: Large ribosomal subunit protein bL20 (118 aa).

The protein belongs to the bacterial ribosomal protein bL20 family.

Its function is as follows. Binds directly to 23S ribosomal RNA and is necessary for the in vitro assembly process of the 50S ribosomal subunit. It is not involved in the protein synthesizing functions of that subunit. The protein is Large ribosomal subunit protein bL20 (rplT) of Thermotoga maritima (strain ATCC 43589 / DSM 3109 / JCM 10099 / NBRC 100826 / MSB8).